Consider the following 163-residue polypeptide: Nucleotide-binding protein C8J_0350 (163 aa).

Belongs to the YajQ family.

Its function is as follows. Nucleotide-binding protein. The sequence is that of Nucleotide-binding protein C8J_0350 from Campylobacter jejuni subsp. jejuni serotype O:6 (strain 81116 / NCTC 11828).